A 383-amino-acid chain; its full sequence is Sphingosine kinase 1 (383 aa).

The 148-residue stretch at 12–159 (PRPCRVLVLL…MNLLSLHTAS (148 aa)) folds into the DAGKc domain. Residues 22–24 (NPR) and 54–58 (TERQN) contribute to the ATP site. 79–82 (SGDG) provides a ligand contact to substrate. Catalysis depends on Asp-81, which acts as the Proton donor/acceptor. ATP contacts are provided by residues Glu-86 and 111-113 (GSG). 2 consecutive short sequence motifs (nuclear export signal) follow at residues 147 to 155 (LSPMNLLSL) and 161 to 169 (RQLYSVLSL). Residue Asp-178 participates in substrate binding. Residues Arg-185 and Arg-191 each contribute to the ATP site. Thr-193 is subject to Phosphothreonine. The residue at position 225 (Ser-225) is a Phosphoserine. An ATP-binding site is contributed by 340–342 (DGE). Residues 363 to 383 (GSSDSPSGRDSQRRPPPEEPI) form a disordered region. Residues 372–383 (DSQRRPPPEEPI) show a composition bias toward basic and acidic residues.

As to quaternary structure, interacts with ACY1. Binds to calmodulin. Interacts with SPHKAP. Interacts with CIB1, the interaction occurs in a calcium-dependent manner. Interacts with TRAF2. Interacts with EEF1A1; the interaction enhances SPHK1 kinase activity. Requires Mg(2+) as cofactor. In terms of tissue distribution, expressed in microglia (at protein level).

The protein localises to the cytoplasm. Its subcellular location is the nucleus. It is found in the cell membrane. The protein resides in the endosome membrane. It localises to the membrane. The protein localises to the clathrin-coated pit. Its subcellular location is the synapse. It catalyses the reaction a sphingoid base + ATP = a sphingoid 1-phosphate + ADP + H(+). The enzyme catalyses L-seryl-[protein] + acetyl-CoA = O-acetyl-L-seryl-[protein] + CoA. It carries out the reaction sphinganine + ATP = sphinganine 1-phosphate + ADP + H(+). The catalysed reaction is sphing-4-enine + ATP = sphing-4-enine 1-phosphate + ADP + H(+). It catalyses the reaction 1-O-hexadecyl-2-amino-sn-glycerol + ATP = 1-O-hexadecyl-2-desoxy-2-amino-sn-glycero-3-phosphate + ADP + H(+). With respect to regulation, acetyltransferase activity increases in presence of the kinase substrate, sphingosine. In Purkinje cells, kinase activity on sphingosine increases in presence of VEGFA. In neurons, kinase activity increases during the first 24h in presence of Amyloid-beta protein 42 to decrease after 96h. Its function is as follows. Catalyzes the phosphorylation of sphingosine to form sphingosine 1-phosphate (SPP), a lipid mediator with both intra- and extracellular functions. Also acts on D-erythro-sphingosine and to a lesser extent sphinganine, but not other lipids, such as D,L-threo-dihydrosphingosine, N,N-dimethylsphingosine, diacylglycerol, ceramide, or phosphatidylinositol. In contrast to proapoptotic SPHK2, has a negative effect on intracellular ceramide levels, enhances cell growth and inhibits apoptosis. Involved in the regulation of inflammatory response and neuroinflammation. Via the product sphingosine 1-phosphate, stimulates TRAF2 E3 ubiquitin ligase activity, and promotes activation of NF-kappa-B in response to TNF signaling leading to IL17 secretion. In response to TNF and in parallel to NF-kappa-B activation, negatively regulates RANTES induction through p38 MAPK signaling pathway. Involved in endocytic membrane trafficking induced by sphingosine, recruited to dilate endosomes, also plays a role on later stages of endosomal maturation and membrane fusion independently of its kinase activity. In Purkinje cells, seems to be also involved in the regulation of autophagosome-lysosome fusion upon VEGFA. Functionally, has serine acetyltransferase activity on PTGS2/COX2 in an acetyl-CoA dependent manner. The acetyltransferase activity increases in presence of the kinase substrate, sphingosine. During neuroinflammation, through PTGS2 acetylation, promotes neuronal secretion of specialized preresolving mediators (SPMs), especially 15-R-lipoxin A4, which results in an increase of phagocytic microglia. This is Sphingosine kinase 1 (Sphk1) from Rattus norvegicus (Rat).